A 471-amino-acid chain; its full sequence is BRISC complex subunit FAM175B (471 aa).

An MPN domain is found at 7–161; the sequence is LVTISGAALS…THKFRHVFLR (155 aa). Positions 245 to 272 form a coiled coil; it reads ESDLEVAELEKQVHELKIKIATQQLAKR. The interval 343–445 is disordered; it reads AEKSRRAGRS…FSDAECPISS (103 aa). Residues 359–370 show a composition bias toward low complexity; that stretch reads NQQQETQNFFTN.

This sequence belongs to the FAM175 family. Abro1 subfamily. Component of the BRISC complex, at least composed of FAM175B/ABRO1, BRCC3/BRCC36, BABAM2 and BABAM1/NBA1. Within the complex, interacts directly with BRCC3/BRCC36. The heterodimer with BRCC3/BRCC36 assembles into a heterotetramer. The BRISC complex binds polyubiquitin.

It localises to the cytoplasm. Its subcellular location is the nucleus. It is found in the cytoskeleton. The protein resides in the spindle pole. In terms of biological role, component of the BRISC complex that specifically cleaves 'Lys-63'-linked polyubiquitin, leaving the last ubiquitin chain attached to its substrates. Does not have activity by itself, but the catalytic subunit BRCC3/BRCC36 needs to be associated into a heterotetramer with FAM175B for minimal in vitro activity. May act as a central scaffold protein that assembles the various components of the BRISC complex and retains them in the cytoplasm. Plays a role in regulating the onset of apoptosis via its role in modulating 'Lys-63'-linked ubiquitination of target proteins. Required for normal mitotic spindle assembly and microtubule attachment to kinetochores via its role in deubiquitinating numa1. This is BRISC complex subunit FAM175B from Camponotus floridanus (Florida carpenter ant).